The sequence spans 175 residues: Bcl-2-related protein A1 (175 aa).

The BH1 motif lies at 77-97 (KEFEDGIINWGRIVTIFAFEG). Residues 132 to 147 (EWIRQNGGWENGFVKK) carry the BH2 motif.

The protein belongs to the Bcl-2 family. As to quaternary structure, interacts directly with BAK1, BID, BMF and BBC3. Interacts directly with BCL2L11/BIM. Interacts with BAX isoform Sigma. Interacts directly with PMAIP1. Interacts with RTL10/BOP. Interacts with ING4. Interacts with UBQLN4. As to expression, seems to be restricted to the hematopoietic compartment. Expressed in peripheral blood, spleen, and bone marrow, at moderate levels in lung, small intestine and testis, at a minimal levels in other tissues. Also found in vascular smooth muscle cells and hematopoietic malignancies.

The protein localises to the cytoplasm. Its function is as follows. Retards apoptosis induced by IL-3 deprivation. May function in the response of hemopoietic cells to external signals and in maintaining endothelial survival during infection. Can inhibit apoptosis induced by serum starvation in the mammary epithelial cell line HC11. The polypeptide is Bcl-2-related protein A1 (BCL2A1) (Homo sapiens (Human)).